The primary structure comprises 317 residues: L-lactate dehydrogenase 1 (317 aa).

Residues Val-17, Asp-38, Lys-43, Tyr-69, and 83–84 (GA) contribute to the NAD(+) site. 2 residues coordinate substrate: Gln-86 and Arg-92. NAD(+) is bound by residues Ser-105, 122–124 (ATN), and Ser-147. 124 to 127 (NPVD) provides a ligand contact to substrate. 152–155 (DSAR) provides a ligand contact to substrate. The Proton acceptor role is filled by His-179. A Phosphotyrosine modification is found at Tyr-223. Thr-232 contributes to the substrate binding site.

This sequence belongs to the LDH/MDH superfamily. LDH family. In terms of assembly, homotetramer.

Its subcellular location is the cytoplasm. It carries out the reaction (S)-lactate + NAD(+) = pyruvate + NADH + H(+). It functions in the pathway fermentation; pyruvate fermentation to lactate; (S)-lactate from pyruvate: step 1/1. In terms of biological role, catalyzes the conversion of lactate to pyruvate (Potential). Appears to be the primary factor that allows S.aureus growth during nitrosative stress in both aerobically and anaerobically cultured cells. This Staphylococcus aureus (strain JH1) protein is L-lactate dehydrogenase 1.